The primary structure comprises 144 residues: ATP synthase epsilon chain (144 aa).

It belongs to the ATPase epsilon chain family. In terms of assembly, F-type ATPases have 2 components, CF(1) - the catalytic core - and CF(0) - the membrane proton channel. CF(1) has five subunits: alpha(3), beta(3), gamma(1), delta(1), epsilon(1). CF(0) has three main subunits: a, b and c.

It localises to the cell inner membrane. Functionally, produces ATP from ADP in the presence of a proton gradient across the membrane. This chain is ATP synthase epsilon chain, found in Ectopseudomonas mendocina (strain ymp) (Pseudomonas mendocina).